A 438-amino-acid polypeptide reads, in one-letter code: Anaerobic glycerol-3-phosphate dehydrogenase subunit B (438 aa).

This sequence belongs to the anaerobic G-3-P dehydrogenase subunit B family. In terms of assembly, composed of a catalytic GlpA/B dimer and of membrane bound GlpC. FMN serves as cofactor.

It catalyses the reaction a quinone + sn-glycerol 3-phosphate = dihydroxyacetone phosphate + a quinol. It functions in the pathway polyol metabolism; glycerol degradation via glycerol kinase pathway; glycerone phosphate from sn-glycerol 3-phosphate (anaerobic route): step 1/1. Conversion of glycerol 3-phosphate to dihydroxyacetone. Uses fumarate or nitrate as electron acceptor. The polypeptide is Anaerobic glycerol-3-phosphate dehydrogenase subunit B (Vibrio vulnificus (strain CMCP6)).